The primary structure comprises 38 residues: EHIDYSQVSGDWHSLSIAADSMDKIRENGELRMHLNHL.

This sequence belongs to the calycin superfamily. Lipocalin family. Nasal mucosa.

It localises to the secreted. It is found in the extracellular space. Its function is as follows. This soluble protein may play a specific role in odor discrimination and perception. This chain is Odorant-binding protein 2, found in Hystrix cristata (North African crested porcupine).